The sequence spans 128 residues: Cyclin-dependent protein kinase inhibitor SMR1 (128 aa).

Positions 17–74 (PIKIRSKTSKTKKDEGDDDEDDLRCSTPTSQEHKIPAVVDSPPPPPRKPRPPPSAPSA) are disordered. Over residues 57 to 71 (SPPPPPRKPRPPPSA) the composition is skewed to pro residues.

Interacts with CDKB1-1. Interacts with CPR5. As to expression, expressed in roots, leaves, stems, siliques and flowers. Expressed in the root elongation zone.

The protein localises to the nucleus. Its function is as follows. Probable cyclin-dependent protein kinase (CDK) inhibitor that functions as a repressor of mitosis in the endoreduplication cell cycle. Cooperates with SIM and SMR2 to promote endoreplication during leaf development. Specifically regulates endoreduplication in epidermal pavement cells to produce the cell size pattern. Is necessary for giant cell formation. Positive regulator of effector-triggered immunity (ETI). This is Cyclin-dependent protein kinase inhibitor SMR1 from Arabidopsis thaliana (Mouse-ear cress).